Consider the following 248-residue polypeptide: Large ribosomal subunit protein uL30B (248 aa).

The disordered stretch occupies residues 1–45; it reads MSQKKQKIQVEQKVPENVAKKTQRDSKLRDAVAKRRTERLAANKT. The span at 8-41 shows a compositional bias: basic and acidic residues; it reads IQVEQKVPENVAKKTQRDSKLRDAVAKRRTERLA.

This sequence belongs to the universal ribosomal protein uL30 family.

Functionally, binds to G-rich structures in 28S rRNA and in mRNAs. Plays a regulatory role in the translation apparatus; inhibits cell-free translation of mRNAs. In Paramecium tetraurelia, this protein is Large ribosomal subunit protein uL30B (Rpl7-2).